Here is a 65-residue protein sequence, read N- to C-terminus: Sodium channel neurotoxin MeuNaTxalpha-9 (65 aa).

Residues 2-64 (RDGYIANDRN…VPIRIPGECR (63 aa)) enclose the LCN-type CS-alpha/beta domain. 4 disulfide bridges follow: Cys12–Cys63, Cys16–Cys36, Cys22–Cys46, and Cys26–Cys48. Arg64 is modified (arginine amide).

It belongs to the long (4 C-C) scorpion toxin superfamily. Sodium channel inhibitor family. Alpha subfamily. As to expression, expressed by the venom gland.

It is found in the secreted. Alpha toxins bind voltage-independently at site-3 of sodium channels (Nav) and inhibit the inactivation of the activated channels, thereby blocking neuronal transmission. The protein is Sodium channel neurotoxin MeuNaTxalpha-9 of Mesobuthus eupeus (Lesser Asian scorpion).